Consider the following 345-residue polypeptide: Putative F-box protein At3g17265 (345 aa).

The 46-residue stretch at 1–46 folds into the F-box domain; sequence MMFAYLPPDLESEILSRVPATFLKELQTTCKRWYALFRDPIFVKKN.

This Arabidopsis thaliana (Mouse-ear cress) protein is Putative F-box protein At3g17265.